The chain runs to 97 residues: Biogenesis of lysosome-related organelles complex 1 subunit SNN1 (97 aa).

The stretch at 45 to 97 (VVRLKQIRNLLKEEQEYYNEEEGLGVERERLEELELRVEKLTQKYKKLLADCV) forms a coiled coil.

This sequence belongs to the SNAPIN family. As to quaternary structure, component of the biogenesis of lysosome-related organelles complex-1 (BLOC-1).

It is found in the endosome. In terms of biological role, component of the biogenesis of lysosome-related organelles complex-1 (BLOC-1), a complex involved in endosomal cargo sorting. This Lachancea thermotolerans (strain ATCC 56472 / CBS 6340 / NRRL Y-8284) (Yeast) protein is Biogenesis of lysosome-related organelles complex 1 subunit SNN1 (SNN1).